Reading from the N-terminus, the 278-residue chain is Type II restriction enzyme AgeI (278 aa).

This sequence belongs to the BsaWI type II restriction endonuclease family.

It catalyses the reaction Endonucleolytic cleavage of DNA to give specific double-stranded fragments with terminal 5'-phosphates.. In terms of biological role, a P subtype restriction enzyme that recognizes the double-stranded sequence 5'-ACCGGT-3' and cleaves after A-1. The chain is Type II restriction enzyme AgeI (ageIR) from Thalassovita gelatinovora (Thalassobius gelatinovorus).